A 308-amino-acid chain; its full sequence is Ribosomal RNA small subunit methyltransferase H (308 aa).

S-adenosyl-L-methionine is bound by residues 32 to 34 (AGH), Asp51, Phe78, Asp99, and Gln106.

The protein belongs to the methyltransferase superfamily. RsmH family.

The protein localises to the cytoplasm. It catalyses the reaction cytidine(1402) in 16S rRNA + S-adenosyl-L-methionine = N(4)-methylcytidine(1402) in 16S rRNA + S-adenosyl-L-homocysteine + H(+). Its function is as follows. Specifically methylates the N4 position of cytidine in position 1402 (C1402) of 16S rRNA. In Mesoplasma florum (strain ATCC 33453 / NBRC 100688 / NCTC 11704 / L1) (Acholeplasma florum), this protein is Ribosomal RNA small subunit methyltransferase H.